The following is a 74-amino-acid chain: uncharacterized protein (74 aa).

Transmembrane regions (helical) follow at residues 3 to 23 and 35 to 55; these read YSAL…CFSF and ILFF…MLLT.

The protein localises to the cell membrane. This is an uncharacterized protein from Mycoplasma genitalium (strain ATCC 33530 / DSM 19775 / NCTC 10195 / G37) (Mycoplasmoides genitalium).